A 342-amino-acid polypeptide reads, in one-letter code: Strictosidine synthase (342 aa).

The first 20 residues, 1 to 20 (KLSDSQTMALFTVFLLFLSS), serve as a signal peptide directing secretion. N-linked (GlcNAc...) asparagine glycosylation is present at N89.

It belongs to the strictosidine synthase family. As to quaternary structure, monomer.

The protein localises to the vacuole. It catalyses the reaction 3alpha(S)-strictosidine + H2O = secologanin + tryptamine. Its pathway is alkaloid biosynthesis; 3alpha(S)-strictosidine biosynthesis; 3alpha(S)-strictosidine from secologanin and tryptamine: step 1/1. In terms of biological role, catalyzes the stereospecific condensation of tryptamine with secologanin to form strictosidine, the key intermediate of indole alkaloid biosynthesis. The polypeptide is Strictosidine synthase (STR1) (Rauvolfia mannii).